The primary structure comprises 261 residues: MAPQQGRPALPARCEPPAAPPVPPRRERGGRGARGPGVSGGRGRAGGAEGRGVKCVLVGDGAVGKTSLVVSYTTNGYPTEYIPTAFDNFSAVVSVDGRPVRLQLCDTAGQDEFDKLRPLCYTNTDIFLLCFSVVSPTSFQNVGEKWVPEIRRHCPKAPIILVGTQSDLREDVKVLIELDKCKEKPVPEEAAKLCAEEVKAVSYIECSALTQKNLKEVFDAAIVAGIQHSDSQLQPKKSKSRTPDKVRDLSKSWWRKYCCLA.

Positions 1-48 (MAPQQGRPALPARCEPPAAPPVPPRRERGGRGARGPGVSGGRGRAGGA) are disordered. Residues 7–16 (RPALPARCEP) are compositionally biased toward low complexity. Residues 32-48 (GARGPGVSGGRGRAGGA) show a composition bias toward gly residues. GTP is bound by residues 59–66 (GDGAVGKT), 106–110 (DTAGQ), and 164–167 (TQSD). Residues lysine 180 and lysine 251 each participate in a glycyl lysine isopeptide (Lys-Gly) (interchain with G-Cter in ubiquitin) cross-link. The S-palmitoyl cysteine moiety is linked to residue cysteine 259.

It belongs to the small GTPase superfamily. Rho family. In terms of assembly, interacts with PAK1. Interacts with PAK3. Interacts with ARHGAP30 in a GTP-independent manner. In its GTP-loaded conformation, interacts with ARHGAP31. Interacts with PTK2B/PYK2. Interacts with PAK4; interaction protects RHOU from ubiquitination and subsequent degradation. The cofactor is Mg(2+). In terms of processing, tyrosine phosphorylated by SRC in response to PTK2B/PYK2 activation. Post-translationally, ubiquitinated. 'Lys-48'-linked ubiquitination at Lys-180 and Lys-251 by the ECS(RAB40A) complex leading to its degradation.

It is found in the cell membrane. It localises to the golgi apparatus membrane. The protein resides in the cell junction. The protein localises to the focal adhesion. Its subcellular location is the cell projection. It is found in the podosome. Binds to and activates protein kinase PAK1. Plays a role in the regulation of cell morphology, cytoskeletal organization and focal adhesion assembly during cell migration. Also stimulates quiescent cells to reenter the cell cycle. Has no detectable GTPase activity but its high intrinsic guanine nucleotide exchange activity suggests it is constitutively GTP-bound. The protein is Rho-related GTP-binding protein RhoU of Mus musculus (Mouse).